The following is a 379-amino-acid chain: Cytochrome b (379 aa).

4 consecutive transmembrane segments (helical) span residues 33 to 53 (FGSL…FLAM), 77 to 98 (WLIR…YFHI), 113 to 133 (WNMG…GYVL), and 178 to 198 (FFAF…IHLL). Heme b is bound by residues His83 and His97. The heme b site is built by His182 and His196. An a ubiquinone-binding site is contributed by His201. Transmembrane regions (helical) follow at residues 226-246 (IKDI…VMFS), 288-308 (LGGV…PILH), 320-340 (LSQC…WIGG), and 347-367 (FITI…ILMP).

It belongs to the cytochrome b family. The cytochrome bc1 complex contains 11 subunits: 3 respiratory subunits (MT-CYB, CYC1 and UQCRFS1), 2 core proteins (UQCRC1 and UQCRC2) and 6 low-molecular weight proteins (UQCRH/QCR6, UQCRB/QCR7, UQCRQ/QCR8, UQCR10/QCR9, UQCR11/QCR10 and a cleavage product of UQCRFS1). This cytochrome bc1 complex then forms a dimer. Requires heme b as cofactor.

The protein resides in the mitochondrion inner membrane. Its function is as follows. Component of the ubiquinol-cytochrome c reductase complex (complex III or cytochrome b-c1 complex) that is part of the mitochondrial respiratory chain. The b-c1 complex mediates electron transfer from ubiquinol to cytochrome c. Contributes to the generation of a proton gradient across the mitochondrial membrane that is then used for ATP synthesis. The protein is Cytochrome b (MT-CYB) of Ctenomys leucodon (White-toothed tuco-tuco).